Reading from the N-terminus, the 97-residue chain is Mitochondrial import inner membrane translocase subunit Tim8 A (97 aa).

The short motif at Cys43 to Cys66 is the Twin CX3C motif element. Intrachain disulfides connect Cys43/Cys66 and Cys47/Cys62. A phosphoserine mark is found at Ser57, Ser87, Ser94, and Ser96.

This sequence belongs to the small Tim family. Heterohexamer; composed of 3 copies of TIMM8A and 3 copies of TIMM13, named soluble 70 kDa complex. Associates with the TIM22 complex, whose core is composed of TIMM22.

The protein resides in the mitochondrion inner membrane. Mitochondrial intermembrane chaperone that participates in the import and insertion of some multi-pass transmembrane proteins into the mitochondrial inner membrane. Also required for the transfer of beta-barrel precursors from the TOM complex to the sorting and assembly machinery (SAM complex) of the outer membrane. Acts as a chaperone-like protein that protects the hydrophobic precursors from aggregation and guide them through the mitochondrial intermembrane space. The TIMM8-TIMM13 complex mediates the import of proteins such as TIMM23, SLC25A12/ARALAR1 and SLC25A13/ARALAR2, while the predominant TIMM9-TIMM10 70 kDa complex mediates the import of much more proteins. This chain is Mitochondrial import inner membrane translocase subunit Tim8 A (Timm8a), found in Rattus norvegicus (Rat).